The sequence spans 595 residues: Isoprene synthase, chloroplastic (595 aa).

A chloroplast-targeting transit peptide spans 1–37 (MATELLCLHRPISLTHKLFRNPLPKVIQATPLTLKLR). D345 contacts dimethylallyl diphosphate. Residues D345 and D349 each contribute to the Mg(2+) site. Positions 345 to 349 (DDIYD) match the DDXXD motif motif. Dimethylallyl diphosphate is bound by residues E423, R486, and N489. Residues N489, S493, and E497 each contribute to the Mg(2+) site.

Belongs to the terpene synthase family. Tpsb subfamily. Homodimer. Mg(2+) is required as a cofactor. Mn(2+) serves as cofactor.

Its subcellular location is the plastid. It localises to the chloroplast. The catalysed reaction is dimethylallyl diphosphate = isoprene + diphosphate. The protein operates within secondary metabolite biosynthesis; terpenoid biosynthesis. With respect to regulation, competitive inhibition is mediated by geranyl diphosphate (GPP). Its function is as follows. Lyase that catalyzes the formation of isoprene from dimethylallyl diphosphate via a syn-periplanar elimination mechanism in which the diphosphate-leaving group serves as a general base. The protein is Isoprene synthase, chloroplastic of Populus canescens (Grey poplar).